A 210-amino-acid chain; its full sequence is Orotate phosphoribosyltransferase (210 aa).

Residues arginine 94, lysine 98, histidine 100, and 120-128 each bind 5-phospho-alpha-D-ribose 1-diphosphate; that span reads EDLISTGGS. Serine 124 lines the orotate pocket.

The protein belongs to the purine/pyrimidine phosphoribosyltransferase family. PyrE subfamily. In terms of assembly, homodimer. Mg(2+) serves as cofactor.

It carries out the reaction orotidine 5'-phosphate + diphosphate = orotate + 5-phospho-alpha-D-ribose 1-diphosphate. It functions in the pathway pyrimidine metabolism; UMP biosynthesis via de novo pathway; UMP from orotate: step 1/2. In terms of biological role, catalyzes the transfer of a ribosyl phosphate group from 5-phosphoribose 1-diphosphate to orotate, leading to the formation of orotidine monophosphate (OMP). The protein is Orotate phosphoribosyltransferase of Bacillus mycoides (strain KBAB4) (Bacillus weihenstephanensis).